Here is a 268-residue protein sequence, read N- to C-terminus: uncharacterized protein (268 aa).

This sequence to M.tuberculosis Rv0025 and Rv0026.

This is an uncharacterized protein from Mycobacterium tuberculosis (strain CDC 1551 / Oshkosh).